The chain runs to 546 residues: Chaperonin GroEL 5 (546 aa).

Residues 30–33, lysine 51, 87–91, glycine 415, and aspartate 495 contribute to the ATP site; these read TLGP and DGTTT.

Belongs to the chaperonin (HSP60) family. As to quaternary structure, forms a cylinder of 14 subunits composed of two heptameric rings stacked back-to-back. Interacts with the co-chaperonin GroES.

It localises to the cytoplasm. The enzyme catalyses ATP + H2O + a folded polypeptide = ADP + phosphate + an unfolded polypeptide.. Its function is as follows. Together with its co-chaperonin GroES, plays an essential role in assisting protein folding. The GroEL-GroES system forms a nano-cage that allows encapsulation of the non-native substrate proteins and provides a physical environment optimized to promote and accelerate protein folding. This chain is Chaperonin GroEL 5, found in Paraburkholderia xenovorans (strain LB400).